The primary structure comprises 103 residues: uncharacterized protein (103 aa).

The signal sequence occupies residues 1-22 (MFRPFLNSLMLGSLFFPFIAIA).

The protein to the N-terminal of the FimA/PapA family of fimbria proteins.

This is an uncharacterized protein from Escherichia coli (strain K12).